Consider the following 20-residue polypeptide: Dahlein-5.1 (20 aa).

As to expression, expressed by the skin dorsal glands.

Its subcellular location is the secreted. Has no antimicrobial activity. Strongly inhibits the formation of NO by neuronal nitric oxide synthase at micromolar concentrations. Acts by a non-competitive mechanism, probably by binding to calcium/calmodulin and as a consequence blocking calmodulin attachment to nNOS. This Ranoidea dahlii (Dahl's aquatic frog) protein is Dahlein-5.1.